Here is a 453-residue protein sequence, read N- to C-terminus: Tubulin alpha chain (453 aa).

Q11 serves as a coordination point for GTP. At K40 the chain carries N6-acetyllysine. GTP is bound by residues E71, G144, T145, T179, N206, and N228. E71 serves as a coordination point for Mg(2+). E254 is a catalytic residue.

The protein belongs to the tubulin family. As to quaternary structure, dimer of alpha and beta chains. A typical microtubule is a hollow water-filled tube with an outer diameter of 25 nm and an inner diameter of 15 nM. Alpha-beta heterodimers associate head-to-tail to form protofilaments running lengthwise along the microtubule wall with the beta-tubulin subunit facing the microtubule plus end conferring a structural polarity. Microtubules usually have 13 protofilaments but different protofilament numbers can be found in some organisms and specialized cells. It depends on Mg(2+) as a cofactor. In terms of processing, undergoes a tyrosination/detyrosination cycle, the cyclic removal and re-addition of a C-terminal tyrosine residue by the enzymes tubulin tyrosine carboxypeptidase (TTCP) and tubulin tyrosine ligase (TTL), respectively. Post-translationally, acetylation of alpha chains at Lys-40 stabilizes microtubules and affects affinity and processivity of microtubule motors. This modification has a role in multiple cellular functions, ranging from cell motility, cell cycle progression or cell differentiation to intracellular trafficking and signaling.

It localises to the cytoplasm. The protein resides in the cytoskeleton. It catalyses the reaction GTP + H2O = GDP + phosphate + H(+). Its function is as follows. Tubulin is the major constituent of microtubules, a cylinder consisting of laterally associated linear protofilaments composed of alpha- and beta-tubulin heterodimers. Microtubules grow by the addition of GTP-tubulin dimers to the microtubule end, where a stabilizing cap forms. Below the cap, tubulin dimers are in GDP-bound state, owing to GTPase activity of alpha-tubulin. This is Tubulin alpha chain (TUBA) from Neospora caninum (Coccidian parasite).